The chain runs to 203 residues: Ribosomal RNA large subunit methyltransferase E (203 aa).

S-adenosyl-L-methionine contacts are provided by G51, W53, D69, D85, and D109. Residue K149 is the Proton acceptor of the active site.

It belongs to the class I-like SAM-binding methyltransferase superfamily. RNA methyltransferase RlmE family.

It localises to the cytoplasm. It catalyses the reaction uridine(2552) in 23S rRNA + S-adenosyl-L-methionine = 2'-O-methyluridine(2552) in 23S rRNA + S-adenosyl-L-homocysteine + H(+). Functionally, specifically methylates the uridine in position 2552 of 23S rRNA at the 2'-O position of the ribose in the fully assembled 50S ribosomal subunit. The chain is Ribosomal RNA large subunit methyltransferase E from Methanoculleus marisnigri (strain ATCC 35101 / DSM 1498 / JR1).